We begin with the raw amino-acid sequence, 428 residues long: Serine--tRNA ligase (428 aa).

236 to 238 (TAE) contributes to the L-serine binding site. 267 to 269 (RSE) lines the ATP pocket. E290 serves as a coordination point for L-serine. Residue 354 to 357 (EISS) coordinates ATP. S388 serves as a coordination point for L-serine.

Belongs to the class-II aminoacyl-tRNA synthetase family. Type-1 seryl-tRNA synthetase subfamily. Homodimer. The tRNA molecule binds across the dimer.

Its subcellular location is the cytoplasm. It catalyses the reaction tRNA(Ser) + L-serine + ATP = L-seryl-tRNA(Ser) + AMP + diphosphate + H(+). The enzyme catalyses tRNA(Sec) + L-serine + ATP = L-seryl-tRNA(Sec) + AMP + diphosphate + H(+). It participates in aminoacyl-tRNA biosynthesis; selenocysteinyl-tRNA(Sec) biosynthesis; L-seryl-tRNA(Sec) from L-serine and tRNA(Sec): step 1/1. Catalyzes the attachment of serine to tRNA(Ser). Is also able to aminoacylate tRNA(Sec) with serine, to form the misacylated tRNA L-seryl-tRNA(Sec), which will be further converted into selenocysteinyl-tRNA(Sec). The polypeptide is Serine--tRNA ligase (Psychrobacter cryohalolentis (strain ATCC BAA-1226 / DSM 17306 / VKM B-2378 / K5)).